The chain runs to 357 residues: Cinnamyl alcohol dehydrogenase 5 (357 aa).

Cysteine 47 is a binding site for Zn(2+). Residue threonine 49 participates in NADP(+) binding. Histidine 69, glutamate 70, cysteine 100, cysteine 103, cysteine 106, cysteine 114, and cysteine 163 together coordinate Zn(2+). Residues threonine 167, 188–193 (GLGGVG), 211–216 (SSSNKK), threonine 251, glycine 275, and 298–300 (SFI) each bind NADP(+).

This sequence belongs to the zinc-containing alcohol dehydrogenase family. As to quaternary structure, homodimer. Zn(2+) is required as a cofactor. Expressed at the lateral root initiation sites, in the vascular tissues of the primary lateral root and the root caps. Expressed in the hypocotyl, cotyledon and leaf veins, apical meristem region, at the base of the trichomes, hydathodes and cauline leaves. In stems, expressed in the cells associated with the vascular cambium, interfascicular cambium and the developing xylem. Expressed in the vascular strand of petals and sepals, anthers, stamen filaments, stigma in flowers, and abscission, style and stigmatic regions of siliques.

The enzyme catalyses (E)-cinnamyl alcohol + NADP(+) = (E)-cinnamaldehyde + NADPH + H(+). It catalyses the reaction (E)-coniferol + NADP(+) = (E)-coniferaldehyde + NADPH + H(+). It carries out the reaction (E)-sinapyl alcohol + NADP(+) = (E)-sinapaldehyde + NADPH + H(+). The catalysed reaction is (E)-4-coumaroyl alcohol + NADP(+) = (E)-4-coumaraldehyde + NADPH + H(+). The enzyme catalyses (E)-caffeyl alcohol + NADP(+) = (E)-caffeyl aldehyde + NADPH + H(+). It functions in the pathway aromatic compound metabolism; phenylpropanoid biosynthesis. Involved in lignin biosynthesis in the floral stem. Catalyzes the final step specific for the production of lignin monomers. Catalyzes the NADPH-dependent reduction of coniferaldehyde, 5-hydroxyconiferaldehyde, sinapaldehyde, 4-coumaraldehyde and caffeyl aldehyde to their respective alcohols. This is Cinnamyl alcohol dehydrogenase 5 from Arabidopsis thaliana (Mouse-ear cress).